We begin with the raw amino-acid sequence, 815 residues long: Probable disease resistance protein At5g66910 (815 aa).

The 150-residue stretch at 1–150 (MVVVDWLGLG…NINKKLDRLS (150 aa)) folds into the RPW8 domain. NB-ARC domains follow at residues 156 to 283 (PLVS…DVWQ) and 341 to 440 (SPDE…DIWM). 196 to 203 (GPPGCGKT) provides a ligand contact to ATP. LRR repeat units lie at residues 656–678 (NLQE…IPEV), 680–702 (SLKT…IGNL), 704–726 (RLEV…TERL), and 728–750 (NLRS…IGKL).

Belongs to the disease resistance NB-LRR family.

Probable disease resistance protein. The protein is Probable disease resistance protein At5g66910 of Arabidopsis thaliana (Mouse-ear cress).